A 248-amino-acid chain; its full sequence is Probable transcriptional regulatory protein blr1534 (248 aa).

A disordered region spans residues 1–21; it reads MAGHSQFKNIMHRKGRQDAQK.

This sequence belongs to the TACO1 family.

Its subcellular location is the cytoplasm. The sequence is that of Probable transcriptional regulatory protein blr1534 from Bradyrhizobium diazoefficiens (strain JCM 10833 / BCRC 13528 / IAM 13628 / NBRC 14792 / USDA 110).